The following is a 362-amino-acid chain: Chorismate synthase (362 aa).

Residue Arg46 coordinates NADP(+). FMN contacts are provided by residues 122 to 124 (RSS), 238 to 239 (NA), Gly278, 293 to 297 (KPTPS), and Arg319.

It belongs to the chorismate synthase family. In terms of assembly, homotetramer. FMNH2 serves as cofactor.

It carries out the reaction 5-O-(1-carboxyvinyl)-3-phosphoshikimate = chorismate + phosphate. Its pathway is metabolic intermediate biosynthesis; chorismate biosynthesis; chorismate from D-erythrose 4-phosphate and phosphoenolpyruvate: step 7/7. Catalyzes the anti-1,4-elimination of the C-3 phosphate and the C-6 proR hydrogen from 5-enolpyruvylshikimate-3-phosphate (EPSP) to yield chorismate, which is the branch point compound that serves as the starting substrate for the three terminal pathways of aromatic amino acid biosynthesis. This reaction introduces a second double bond into the aromatic ring system. This Campylobacter jejuni subsp. doylei (strain ATCC BAA-1458 / RM4099 / 269.97) protein is Chorismate synthase.